The following is a 218-amino-acid chain: Phosphoribosylformylglycinamidine synthase subunit PurQ (218 aa).

The 217-residue stretch at 2 to 218 folds into the Glutamine amidotransferase type-1 domain; the sequence is SIAVLRFPGT…GARMLRGLAC (217 aa). Residue C86 is the Nucleophile of the active site. Residues H195 and E197 contribute to the active site.

As to quaternary structure, part of the FGAM synthase complex composed of 1 PurL, 1 PurQ and 2 PurS subunits.

Its subcellular location is the cytoplasm. The catalysed reaction is N(2)-formyl-N(1)-(5-phospho-beta-D-ribosyl)glycinamide + L-glutamine + ATP + H2O = 2-formamido-N(1)-(5-O-phospho-beta-D-ribosyl)acetamidine + L-glutamate + ADP + phosphate + H(+). It catalyses the reaction L-glutamine + H2O = L-glutamate + NH4(+). The protein operates within purine metabolism; IMP biosynthesis via de novo pathway; 5-amino-1-(5-phospho-D-ribosyl)imidazole from N(2)-formyl-N(1)-(5-phospho-D-ribosyl)glycinamide: step 1/2. Functionally, part of the phosphoribosylformylglycinamidine synthase complex involved in the purines biosynthetic pathway. Catalyzes the ATP-dependent conversion of formylglycinamide ribonucleotide (FGAR) and glutamine to yield formylglycinamidine ribonucleotide (FGAM) and glutamate. The FGAM synthase complex is composed of three subunits. PurQ produces an ammonia molecule by converting glutamine to glutamate. PurL transfers the ammonia molecule to FGAR to form FGAM in an ATP-dependent manner. PurS interacts with PurQ and PurL and is thought to assist in the transfer of the ammonia molecule from PurQ to PurL. This is Phosphoribosylformylglycinamidine synthase subunit PurQ from Wolinella succinogenes (strain ATCC 29543 / DSM 1740 / CCUG 13145 / JCM 31913 / LMG 7466 / NCTC 11488 / FDC 602W) (Vibrio succinogenes).